A 367-amino-acid chain; its full sequence is Chorismate synthase (367 aa).

NADP(+)-binding residues include R48 and R54. Residues 125–127, 238–239, G278, 293–297, and R319 contribute to the FMN site; these read RSS, NA, and KPTSS.

This sequence belongs to the chorismate synthase family. Homotetramer. FMNH2 serves as cofactor.

The enzyme catalyses 5-O-(1-carboxyvinyl)-3-phosphoshikimate = chorismate + phosphate. It functions in the pathway metabolic intermediate biosynthesis; chorismate biosynthesis; chorismate from D-erythrose 4-phosphate and phosphoenolpyruvate: step 7/7. Functionally, catalyzes the anti-1,4-elimination of the C-3 phosphate and the C-6 proR hydrogen from 5-enolpyruvylshikimate-3-phosphate (EPSP) to yield chorismate, which is the branch point compound that serves as the starting substrate for the three terminal pathways of aromatic amino acid biosynthesis. This reaction introduces a second double bond into the aromatic ring system. The chain is Chorismate synthase from Stenotrophomonas maltophilia (strain K279a).